The chain runs to 120 residues: Immunoglobulin kappa variable 2-30 (120 aa).

A signal peptide spans 1 to 20 (MRLPAQLLGLLMLWVPGSSG). Positions 21–43 (DVVMTQSPLSLPVTLGQPASISC) are framework-1. Residues 21–120 (DVVMTQSPLS…YYCMQGTHWP (100 aa)) form the Ig-like domain. A disulfide bond links C43 and C113. The segment at 44–59 (RSSQSLVYSDGNTYLN) is complementarity-determining-1. Positions 60-74 (WFQQRPGQSPRRLIY) are framework-2. The interval 75-81 (KVSNRDS) is complementarity-determining-2. Residues 82–113 (GVPDRFSGSGSGTDFTLKISRVEAEDVGVYYC) form a framework-3 region. A complementarity-determining-3 region spans residues 114 to 120 (MQGTHWP).

Immunoglobulins are composed of two identical heavy chains and two identical light chains; disulfide-linked.

Its subcellular location is the secreted. The protein resides in the cell membrane. Functionally, v region of the variable domain of immunoglobulin light chains that participates in the antigen recognition. Immunoglobulins, also known as antibodies, are membrane-bound or secreted glycoproteins produced by B lymphocytes. In the recognition phase of humoral immunity, the membrane-bound immunoglobulins serve as receptors which, upon binding of a specific antigen, trigger the clonal expansion and differentiation of B lymphocytes into immunoglobulins-secreting plasma cells. Secreted immunoglobulins mediate the effector phase of humoral immunity, which results in the elimination of bound antigens. The antigen binding site is formed by the variable domain of one heavy chain, together with that of its associated light chain. Thus, each immunoglobulin has two antigen binding sites with remarkable affinity for a particular antigen. The variable domains are assembled by a process called V-(D)-J rearrangement and can then be subjected to somatic hypermutations which, after exposure to antigen and selection, allow affinity maturation for a particular antigen. The polypeptide is Immunoglobulin kappa variable 2-30 (Homo sapiens (Human)).